The following is a 142-amino-acid chain: FAD synthase (142 aa).

Residues 9–10 (TF), 14–17 (HPGH), and Asp-92 each bind ATP.

The protein belongs to the archaeal FAD synthase family. In terms of assembly, homodimer. A divalent metal cation is required as a cofactor.

The catalysed reaction is FMN + ATP + H(+) = FAD + diphosphate. Its pathway is cofactor biosynthesis; FAD biosynthesis; FAD from FMN: step 1/1. Functionally, catalyzes the transfer of the AMP portion of ATP to flavin mononucleotide (FMN) to produce flavin adenine dinucleotide (FAD) coenzyme. This Halalkalicoccus jeotgali (strain DSM 18796 / CECT 7217 / JCM 14584 / KCTC 4019 / B3) protein is FAD synthase.